A 531-amino-acid polypeptide reads, in one-letter code: Serine protease gd (531 aa).

The N-terminal stretch at M1–A19 is a signal peptide. The segment at P155–Q174 is disordered. Positions I246–I531 constitute a Peptidase S1 domain. The N-linked (GlcNAc...) asparagine glycan is linked to N272. A disulfide bond links C280 and C296. Residues H295 and D350 each act as charge relay system in the active site. Residues N397 and N445 are each glycosylated (N-linked (GlcNAc...) asparagine). An intrachain disulfide couples C432 to C449. S471 (charge relay system) is an active-site residue.

Belongs to the peptidase S1 family. Post-translationally, proteolytically activated by the protease ndl. In terms of tissue distribution, expression begins in previtellogenic stages and is seen in germline-derived nurse cells of the germarium. Expression continues throughout oogenesis with transcripts from the nurse cells accumulating in the oocytes. Most abundant in the ovaries, the level of protein decreases from the moment of egg laying and is essentially gone by 4 hours.

The protein resides in the secreted. Its function is as follows. Component of the extracellular signaling pathway that establishes the dorsal-ventral pathway of the embryo. A protease cascade involving ndl, gd, snk and ea results in activation of the spz Toll receptor ligand; acts downstream of ndl but upstream of snk and ea. Activation of ea requires activation of the ndl-gd-snk protease cascade and sulfation of a vitelline membrane component by pip. Localized activation of the Toll receptor in the ventral region of the embryo defines cell identities along the dorsal-ventral continuum. The chain is Serine protease gd from Drosophila melanogaster (Fruit fly).